Reading from the N-terminus, the 410-residue chain is Aspartate aminotransferase (410 aa).

Positions 47, 135, and 185 each coordinate L-aspartate. Lys249 bears the N6-(pyridoxal phosphate)lysine mark. Arg385 contacts L-aspartate.

This sequence belongs to the class-I pyridoxal-phosphate-dependent aminotransferase family. Homodimer. Pyridoxal 5'-phosphate is required as a cofactor.

It localises to the cytoplasm. The catalysed reaction is L-aspartate + 2-oxoglutarate = oxaloacetate + L-glutamate. It catalyses the reaction L-2-aminoadipate + 2-oxoglutarate = 2-oxoadipate + L-glutamate. In terms of biological role, catalyzes the reversible conversion of aspartate and 2-oxoglutarate to glutamate and oxaloacetate. Genetic evidence shows that this protein is involved in L-lysine catabolism. It may have 2-aminoadipate:2-oxoglutarate aminotransferase activity. This chain is Aspartate aminotransferase (aatB), found in Rhizobium meliloti (strain 1021) (Ensifer meliloti).